Reading from the N-terminus, the 440-residue chain is NADH-quinone oxidoreductase subunit D 1 (440 aa).

This sequence belongs to the complex I 49 kDa subunit family. In terms of assembly, NDH-1 is composed of 14 different subunits. Subunits NuoB, C, D, E, F, and G constitute the peripheral sector of the complex.

The protein localises to the cell inner membrane. The catalysed reaction is a quinone + NADH + 5 H(+)(in) = a quinol + NAD(+) + 4 H(+)(out). Its function is as follows. NDH-1 shuttles electrons from NADH, via FMN and iron-sulfur (Fe-S) centers, to quinones in the respiratory chain. The immediate electron acceptor for the enzyme in this species is believed to be a menaquinone. Couples the redox reaction to proton translocation (for every two electrons transferred, four hydrogen ions are translocated across the cytoplasmic membrane), and thus conserves the redox energy in a proton gradient. This chain is NADH-quinone oxidoreductase subunit D 1, found in Chloroherpeton thalassium (strain ATCC 35110 / GB-78).